A 313-amino-acid chain; its full sequence is uncharacterized protein (313 aa).

Residues 6–152 (YDILENPEPN…YHASMEKMTG (147 aa)) form the N-acetyltransferase domain.

To the C-terminal of C.elegans F21C10.9. This is an uncharacterized protein from Caenorhabditis elegans.